Here is a 2521-residue protein sequence, read N- to C-terminus: Piezo-type mechanosensitive ion channel component 1 (2521 aa).

The Cytoplasmic segment spans residues M1–W12. A helical transmembrane segment spans residues L13–L25. At R26–S28 the chain is on the extracellular side. The chain crosses the membrane as a helical span at residues G29–F44. Over P45–R58 the chain is Cytoplasmic. A helical membrane pass occupies residues L59–L81. Residues H82–L121 lie on the Extracellular side of the membrane. Residues V122–I138 form a helical membrane-spanning segment. The Cytoplasmic portion of the chain corresponds to C139–W194. The chain crosses the membrane as a helical span at residues L195–A214. At H215 to P216 the chain is on the extracellular side. The helical transmembrane segment at S217 to C236 threads the bilayer. Topologically, residues H237–R247 are cytoplasmic. Residues L248–M268 traverse the membrane as a helical segment. Topologically, residues P269–D309 are extracellular. An N-linked (GlcNAc...) asparagine glycan is attached at N295. The chain crosses the membrane as a helical span at residues W310 to R330. Topologically, residues K331–H417 are cytoplasmic. The chain crosses the membrane as a helical span at residues L418 to Y438. Residues H439–S440 are Extracellular-facing. The chain crosses the membrane as a helical span at residues W441 to V456. The Cytoplasmic portion of the chain corresponds to R457–Q461. The helical transmembrane segment at L462–W484 threads the bilayer. The Extracellular segment spans residues A485 to P512. Residues C513–L530 form a helical membrane-spanning segment. Residues R531–G574 lie on the Cytoplasmic side of the membrane. A helical transmembrane segment spans residues V575–G595. R596 is a topological domain (extracellular). The chain crosses the membrane as a helical span at residues L597–V617. Topologically, residues Y618–K627 are cytoplasmic. Residues A628 to F649 traverse the membrane as a helical segment. The Extracellular portion of the chain corresponds to Q650–E679. Residues L680–L696 form a helical membrane-spanning segment. Over Q697 to K816 the chain is Cytoplasmic. T734 bears the Phosphothreonine mark. The tract at residues R738 to H769 is disordered. Residues Q749–R759 are compositionally biased toward acidic residues. Residue S758 is modified to Phosphoserine. The helical transmembrane segment at L817 to K828 threads the bilayer. Residues E829–S831 lie on the Extracellular side of the membrane. Residues V832–L845 traverse the membrane as a helical segment. Residues P846–T859 are Cytoplasmic-facing. A helical membrane pass occupies residues V860–L874. The Extracellular portion of the chain corresponds to K875 to L926. The chain crosses the membrane as a helical span at residues G927–R954. Residues Q955 to F994 are Cytoplasmic-facing. The chain crosses the membrane as a helical span at residues G995–R1010. Topologically, residues M1011 to N1012 are extracellular. A helical transmembrane segment spans residues F1013–R1028. The Cytoplasmic segment spans residues R1029–Y1041. A helical membrane pass occupies residues C1042–L1057. At G1058 to S1096 the chain is on the extracellular side. Residues T1097–A1118 form a helical membrane-spanning segment. Residues E1119 to S1153 are Cytoplasmic-facing. The chain crosses the membrane as a helical span at residues Y1154–T1180. Residues R1181–F1185 are Extracellular-facing. A helical membrane pass occupies residues G1186–L1204. The Cytoplasmic portion of the chain corresponds to Q1205 to C1217. A helical transmembrane segment spans residues L1218–A1236. At C1237–I1285 the chain is on the extracellular side. The helical transmembrane segment at I1286 to F1302 threads the bilayer. Residues L1303–I1656 are Cytoplasmic-facing. Residues H1339–R1368 are a coiled coil. Disordered stretches follow at residues R1356 to W1402, R1462 to A1498, and T1576 to E1630. The span at L1385–P1398 shows a compositional bias: low complexity. Residues S1391 and S1396 each carry the phosphoserine modification. A phosphoserine mark is found at S1636 and S1646. Residues P1657–M1700 traverse the membrane as a helical segment. Residues V1701–S1704 are Extracellular-facing. A helical transmembrane segment spans residues A1705–L1720. Residues S1721–R1728 lie on the Cytoplasmic side of the membrane. Residues F1729 to F1747 traverse the membrane as a helical segment. Topologically, residues Q1748–T1779 are extracellular. Residues D1780–L1801 form a helical membrane-spanning segment. Residues C1802–V1960 lie on the Cytoplasmic side of the membrane. Residues D1811–E1822 are compositionally biased toward basic and acidic residues. A disordered region spans residues D1811 to R1921. At T1854 the chain carries Phosphothreonine. The span at V1859–R1868 shows a compositional bias: basic and acidic residues. The segment covering I1869–K1878 has biased composition (basic residues). A compositionally biased stretch (acidic residues) spans E1890–K1903. The span at E1904–P1913 shows a compositional bias: basic and acidic residues. The chain crosses the membrane as a helical span at residues Y1961 to W1980. The Extracellular portion of the chain corresponds to A1981 to V2000. The chain crosses the membrane as a helical span at residues P2001–V2017. At D2018 to L2031 the chain is on the cytoplasmic side. A helical membrane pass occupies residues A2032–V2052. Over T2053 to N2060 the chain is Extracellular. The chain crosses the membrane as a helical span at residues V2061–L2076. Over S2077–G2176 the chain is Cytoplasmic. The helical transmembrane segment at G2177–V2197 threads the bilayer. The Extracellular portion of the chain corresponds to R2198 to S2431. N2294 is a glycosylation site (N-linked (GlcNAc...) asparagine). Residues C2411 and C2415 are joined by a disulfide bond. Residues L2432–G2452 traverse the membrane as a helical segment. The Cytoplasmic portion of the chain corresponds to K2453–E2521.

This sequence belongs to the PIEZO (TC 1.A.75) family. In terms of assembly, homotrimer; the homotrimer forms a propeller-shaped Piezo channel with a cation-ion conducting pore. Heterotrimeric interaction may occur between PIEZO1 and PIEZO2. Interacts with PKD2. Interacts with STOML3. Interacts with TMC1, TMC2, PCDH15 and CIB2; the interaction may be part of the MET complex. Interacts with MDFIC (via C-terminus); the interaction prolongs Piezo channel inactivation. Interacts with MDFI (via C-terminus); the interaction prolongs Piezo channel inactivation. Expressed in numerous tissues. In normal brain, expressed exclusively in neurons, not in astrocytes. In Alzheimer disease brains, expressed in about half of the activated astrocytes located around classical senile plaques. In Parkinson disease substantia nigra, not detected in melanin-containing neurons nor in activated astrocytes. Expressed in erythrocytes (at protein level). Expressed in myoblasts (at protein level).

The protein resides in the endoplasmic reticulum membrane. Its subcellular location is the endoplasmic reticulum-Golgi intermediate compartment membrane. It localises to the cell membrane. It is found in the cell projection. The protein localises to the lamellipodium membrane. The catalysed reaction is K(+)(in) = K(+)(out). The enzyme catalyses Na(+)(in) = Na(+)(out). It carries out the reaction Ca(2+)(in) = Ca(2+)(out). It catalyses the reaction Mg(2+)(in) = Mg(2+)(out). Regulated by auxillary subunits MDFIC and MDFI. Down-regulated by phosphatidylserines exposed on the cell surface. Divalent ions decrease the single-channel permeability of K(+). Its function is as follows. Pore-forming subunit of the mechanosensitive non-specific cation Piezo channel required for rapidly adapting mechanically activated (MA) currents and has a key role in sensing touch and tactile pain. Piezo channels are homotrimeric three-blade propeller-shaped structures that utilize a cap-motion and plug-and-latch mechanism to gate their ion-conducting pathways. Generates currents characterized by a linear current-voltage relationship that are sensitive to ruthenium red and gadolinium. Conductance to monovalent alkali ions is highest for K(+), intermediate for Na(+) and lowest for Li(+). Divalent ions except for Mn(2+) permeate the channel but more slowly than the monovalent ions and they also reduce K(+) currents. Plays a key role in epithelial cell adhesion by maintaining integrin activation through R-Ras recruitment to the ER, most probably in its activated state, and subsequent stimulation of calpain signaling. In inner ear hair cells, PIEZO1/2 subunits may constitute part of the mechanotransducer (MET) non-selective cation channel complex where they may act as pore-forming ion-conducting component in the complex. In the kidney, may contribute to the detection of intraluminal pressure changes and to urine flow sensing. Acts as a shear-stress sensor that promotes endothelial cell organization and alignment in the direction of blood flow through calpain activation. Plays a key role in blood vessel formation and vascular structure in both development and adult physiology. Acts as a sensor of phosphatidylserine (PS) flipping at the plasma membrane and governs morphogenesis of muscle cells. In myoblasts, flippase-mediated PS enrichment at the inner leaflet of plasma membrane triggers channel activation and Ca2+ influx followed by Rho GTPases signal transduction, leading to assembly of cortical actomyosin fibers and myotube formation. The sequence is that of Piezo-type mechanosensitive ion channel component 1 from Homo sapiens (Human).